The following is a 752-amino-acid chain: Phosphoribosylformylglycinamidine synthase subunit PurL (752 aa).

Histidine 58 is a catalytic residue. Tyrosine 61 and lysine 103 together coordinate ATP. Glutamate 105 contributes to the Mg(2+) binding site. Residues 106-109 and arginine 128 each bind substrate; that span reads SHNH. The active-site Proton acceptor is the histidine 107. Residue aspartate 129 participates in Mg(2+) binding. Substrate is bound at residue glutamine 253. Aspartate 281 contacts Mg(2+). A substrate-binding site is contributed by 325 to 327; that stretch reads ESQ. Residues aspartate 513 and glycine 550 each coordinate ATP. Asparagine 551 lines the Mg(2+) pocket. Residue serine 553 participates in substrate binding.

Belongs to the FGAMS family. In terms of assembly, monomer. Part of the FGAM synthase complex composed of 1 PurL, 1 PurQ and 2 PurS subunits.

It is found in the cytoplasm. It carries out the reaction N(2)-formyl-N(1)-(5-phospho-beta-D-ribosyl)glycinamide + L-glutamine + ATP + H2O = 2-formamido-N(1)-(5-O-phospho-beta-D-ribosyl)acetamidine + L-glutamate + ADP + phosphate + H(+). Its pathway is purine metabolism; IMP biosynthesis via de novo pathway; 5-amino-1-(5-phospho-D-ribosyl)imidazole from N(2)-formyl-N(1)-(5-phospho-D-ribosyl)glycinamide: step 1/2. Its function is as follows. Part of the phosphoribosylformylglycinamidine synthase complex involved in the purines biosynthetic pathway. Catalyzes the ATP-dependent conversion of formylglycinamide ribonucleotide (FGAR) and glutamine to yield formylglycinamidine ribonucleotide (FGAM) and glutamate. The FGAM synthase complex is composed of three subunits. PurQ produces an ammonia molecule by converting glutamine to glutamate. PurL transfers the ammonia molecule to FGAR to form FGAM in an ATP-dependent manner. PurS interacts with PurQ and PurL and is thought to assist in the transfer of the ammonia molecule from PurQ to PurL. The chain is Phosphoribosylformylglycinamidine synthase subunit PurL from Streptomyces avermitilis (strain ATCC 31267 / DSM 46492 / JCM 5070 / NBRC 14893 / NCIMB 12804 / NRRL 8165 / MA-4680).